Consider the following 429-residue polypeptide: Divergent protein kinase domain 2A (429 aa).

Residues 1 to 34 form the signal peptide; that stretch reads MLRLASLKFGRLFRYAKVLFAASLLVVMLLNTHS.

This sequence belongs to the DIPK family.

It is found in the cytoplasmic vesicle. Its subcellular location is the COPI-coated vesicle. The protein localises to the golgi apparatus. The protein resides in the secreted. Functionally, may play a role in cardiomyocyte proliferation through paracrine signaling and activation of the PPI3K-AKT-CDK7 signaling cascade. The polypeptide is Divergent protein kinase domain 2A (dipk2a) (Xenopus tropicalis (Western clawed frog)).